The primary structure comprises 210 residues: Probable GTP-binding protein EngB (210 aa).

An EngB-type G domain is found at 22-198 (FLPEYAFIGR…LTYIDEVNQE (177 aa)). Residues 30 to 37 (GRSNVGKS), 57 to 61 (GKTQL), 75 to 78 (DLPG), 142 to 145 (TKAD), and 177 to 179 (TSS) each bind GTP. Mg(2+)-binding residues include S37 and T59.

This sequence belongs to the TRAFAC class TrmE-Era-EngA-EngB-Septin-like GTPase superfamily. EngB GTPase family. Mg(2+) is required as a cofactor.

Functionally, necessary for normal cell division and for the maintenance of normal septation. The chain is Probable GTP-binding protein EngB from Flavobacterium johnsoniae (strain ATCC 17061 / DSM 2064 / JCM 8514 / BCRC 14874 / CCUG 350202 / NBRC 14942 / NCIMB 11054 / UW101) (Cytophaga johnsonae).